The following is a 95-amino-acid chain: Acylphosphatase 2 (95 aa).

Positions 6-93 (RVIVTVQGRV…PLPPGFEVRP (88 aa)) constitute an Acylphosphatase-like domain. Catalysis depends on residues Arg21 and Asn39.

The protein belongs to the acylphosphatase family.

The catalysed reaction is an acyl phosphate + H2O = a carboxylate + phosphate + H(+). This is Acylphosphatase 2 (acyP2) from Ralstonia nicotianae (strain ATCC BAA-1114 / GMI1000) (Ralstonia solanacearum).